The chain runs to 73 residues: Exodeoxyribonuclease 7 small subunit (73 aa).

The protein belongs to the XseB family. In terms of assembly, heterooligomer composed of large and small subunits.

Its subcellular location is the cytoplasm. It catalyses the reaction Exonucleolytic cleavage in either 5'- to 3'- or 3'- to 5'-direction to yield nucleoside 5'-phosphates.. Functionally, bidirectionally degrades single-stranded DNA into large acid-insoluble oligonucleotides, which are then degraded further into small acid-soluble oligonucleotides. This Streptococcus mutans serotype c (strain ATCC 700610 / UA159) protein is Exodeoxyribonuclease 7 small subunit.